Consider the following 716-residue polypeptide: 1,4-alpha-glucan branching enzyme GlgB (716 aa).

Aspartate 399 acts as the Nucleophile in catalysis. Glutamate 452 serves as the catalytic Proton donor.

The protein belongs to the glycosyl hydrolase 13 family. GlgB subfamily. In terms of assembly, monomer.

It catalyses the reaction Transfers a segment of a (1-&gt;4)-alpha-D-glucan chain to a primary hydroxy group in a similar glucan chain.. Its pathway is glycan biosynthesis; glycogen biosynthesis. Its function is as follows. Catalyzes the formation of the alpha-1,6-glucosidic linkages in glycogen by scission of a 1,4-alpha-linked oligosaccharide from growing alpha-1,4-glucan chains and the subsequent attachment of the oligosaccharide to the alpha-1,6 position. This Rhodopseudomonas palustris (strain BisB5) protein is 1,4-alpha-glucan branching enzyme GlgB.